We begin with the raw amino-acid sequence, 51 residues long: Large ribosomal subunit protein eL39 (51 aa).

A disordered region spans residues 32 to 51; it reads KGSVKQHPKMRHWRRNTLKK. Basic residues predominate over residues 33-51; sequence GSVKQHPKMRHWRRNTLKK.

It belongs to the eukaryotic ribosomal protein eL39 family.

The protein is Large ribosomal subunit protein eL39 of Methanococcus vannielii (strain ATCC 35089 / DSM 1224 / JCM 13029 / OCM 148 / SB).